A 266-amino-acid chain; its full sequence is Bax inhibitor 1 (266 aa).

Residues 1–22 form a disordered region; sequence MPANYQSVPQDDPSVPNLAQAP. A run of 7 helical transmembrane segments spans residues 70 to 90, 92 to 112, 123 to 143, 147 to 167, 177 to 197, 201 to 221, and 240 to 260; these read LFVT…SFWV, MHPW…FGLI, IFLF…ITFF, IILE…AFTF, GGFL…FFFV, PFID…YILF, and LMLY…LGML.

The protein belongs to the BI1 family. LFG subfamily.

It localises to the endoplasmic reticulum membrane. The protein resides in the mitochondrion membrane. It is found in the golgi apparatus membrane. The protein localises to the vacuole membrane. Its function is as follows. Links the unfolded protein response and programmed cell death and mediates mitochondrial-dependent apoptosis. Induces cell death and disruption of the mitochondrial transmembrane potential. This Schizosaccharomyces pombe (strain 972 / ATCC 24843) (Fission yeast) protein is Bax inhibitor 1 (bxi1).